The sequence spans 432 residues: Glutamate-1-semialdehyde 2,1-aminomutase (432 aa).

Lys270 is modified (N6-(pyridoxal phosphate)lysine).

The protein belongs to the class-III pyridoxal-phosphate-dependent aminotransferase family. HemL subfamily. As to quaternary structure, homodimer. Pyridoxal 5'-phosphate is required as a cofactor.

Its subcellular location is the cytoplasm. The catalysed reaction is (S)-4-amino-5-oxopentanoate = 5-aminolevulinate. The protein operates within porphyrin-containing compound metabolism; protoporphyrin-IX biosynthesis; 5-aminolevulinate from L-glutamyl-tRNA(Glu): step 2/2. This is Glutamate-1-semialdehyde 2,1-aminomutase from Acinetobacter baylyi (strain ATCC 33305 / BD413 / ADP1).